Here is a 481-residue protein sequence, read N- to C-terminus: Two-component response regulator ORR32 (481 aa).

Residues 13–138 (HVMLVDDDTK…TIALWRVVAW (126 aa)) form the Response regulatory domain. A 4-aspartylphosphate modification is found at Asp-66.

This sequence belongs to the ARR family. Type-B subfamily. Two-component system major event consists of a His-to-Asp phosphorelay between a sensor histidine kinase (HK) and a response regulator (RR). In plants, the His-to-Asp phosphorelay involves an additional intermediate named Histidine-containing phosphotransfer protein (HPt). This multistep phosphorelay consists of a His-Asp-His-Asp sequential transfer of a phosphate group between first a His and an Asp of the HK protein, followed by the transfer to a conserved His of the HPt protein and finally the transfer to an Asp in the receiver domain of the RR protein.

In terms of biological role, functions as a response regulator involved in His-to-Asp phosphorelay signal transduction system. Phosphorylation of the Asp residue in the receiver domain activates the ability of the protein to promote the transcription of target genes. May directly activate some type-A response regulators in response to cytokinins. This chain is Two-component response regulator ORR32, found in Oryza sativa subsp. japonica (Rice).